Here is a 131-residue protein sequence, read N- to C-terminus: Small ribosomal subunit protein bS6 (131 aa).

K93 is subject to N6-acetyllysine. The disordered stretch occupies residues 98–131; sequence EASPMVKAKDERRERRDDFANETADDAEAGDSEE. The span at 104–116 shows a compositional bias: basic and acidic residues; sequence KAKDERRERRDDF. Residues 120–131 are compositionally biased toward acidic residues; it reads TADDAEAGDSEE.

The protein belongs to the bacterial ribosomal protein bS6 family.

Binds together with bS18 to 16S ribosomal RNA. This Escherichia fergusonii (strain ATCC 35469 / DSM 13698 / CCUG 18766 / IAM 14443 / JCM 21226 / LMG 7866 / NBRC 102419 / NCTC 12128 / CDC 0568-73) protein is Small ribosomal subunit protein bS6.